The chain runs to 647 residues: tRNA 5-methylaminomethyl-2-thiouridine biosynthesis bifunctional protein MnmC (647 aa).

Residues 1–235 (MSIPPFSQAS…KRDMLCGRFT (235 aa)) form a tRNA (mnm(5)s(2)U34)-methyltransferase region. The tract at residues 250-647 (IGGGIAGTAS…RGLACHPLRR (398 aa)) is FAD-dependent cmnm(5)s(2)U34 oxidoreductase.

It in the N-terminal section; belongs to the methyltransferase superfamily. tRNA (mnm(5)s(2)U34)-methyltransferase family. The protein in the C-terminal section; belongs to the DAO family. It depends on FAD as a cofactor.

It localises to the cytoplasm. The enzyme catalyses 5-aminomethyl-2-thiouridine(34) in tRNA + S-adenosyl-L-methionine = 5-methylaminomethyl-2-thiouridine(34) in tRNA + S-adenosyl-L-homocysteine + H(+). Functionally, catalyzes the last two steps in the biosynthesis of 5-methylaminomethyl-2-thiouridine (mnm(5)s(2)U) at the wobble position (U34) in tRNA. Catalyzes the FAD-dependent demodification of cmnm(5)s(2)U34 to nm(5)s(2)U34, followed by the transfer of a methyl group from S-adenosyl-L-methionine to nm(5)s(2)U34, to form mnm(5)s(2)U34. The chain is tRNA 5-methylaminomethyl-2-thiouridine biosynthesis bifunctional protein MnmC from Methylobacillus flagellatus (strain ATCC 51484 / DSM 6875 / VKM B-1610 / KT).